A 320-amino-acid chain; its full sequence is MAKQTLLLSPPSLSSQPGKLNETLQSYNRNATDLQMLDRLALGLASLPDSTYSTIVILAGGDNSFSESLKLINRQTFNQIIGSLRRGGYIYGQDAVSGVAFDHNEAILAGLIHVGNGKYLKPDIEEMQAVPLRLGRKNDHLAGAPSLEGSAAEHPFPPEVSEGKTASGDNRVAVVGSQKFRENIVSAATMDNNEASDDELINEDNLLDDSELSAPIIQPPECRPKAGKRRRACKDCTCGLAQKLQEEDAVKRADADEQLDAMKLLHDDLAEVDFTVRGKVGSCGNCSLGDAFRCEGCPFIGLPAFQPGEEVRLLNNDVQL.

The tract at residues 1-130 (MAKQTLLLSP…KPDIEEMQAV (130 aa)) is N-terminal SAM-like domain. The tract at residues 131 to 213 (PLRLGRKNDH…DNLLDDSELS (83 aa)) is linker. The interval 141 to 166 (LAGAPSLEGSAAEHPFPPEVSEGKTA) is disordered. [2Fe-2S] cluster is bound by residues Cys-222, Cys-233, Cys-236, and Cys-238. The interval 222 to 238 (CRPKAGKRRRACKDCTC) is fe-S binding site A. [4Fe-4S] cluster contacts are provided by Cys-283, Cys-286, Cys-294, and Cys-297. 2 consecutive short sequence motifs (cx2C motif) follow at residues 283-286 (CGNC) and 294-297 (CEGC). The interval 283–297 (CGNCSLGDAFRCEGC) is fe-S binding site B.

This sequence belongs to the anamorsin family. Monomer. Interacts with tah18. Interacts with mia40. [2Fe-2S] cluster serves as cofactor. It depends on [4Fe-4S] cluster as a cofactor.

The protein localises to the cytoplasm. It localises to the mitochondrion intermembrane space. In terms of biological role, component of the cytosolic iron-sulfur (Fe-S) protein assembly (CIA) machinery required for the maturation of extramitochondrial Fe-S proteins. Part of an electron transfer chain functioning in an early step of cytosolic Fe-S biogenesis, facilitating the de novo assembly of a [4Fe-4S] cluster on the scaffold complex cfd1-nbp35. Electrons are transferred to dre2 from NADPH via the FAD- and FMN-containing protein tah18. Tah18-dre2 are also required for the assembly of the diferric tyrosyl radical cofactor of ribonucleotide reductase (RNR), probably by providing electrons for reduction during radical cofactor maturation in the catalytic small subunit rnr2. The polypeptide is Fe-S cluster assembly protein dre2 (Neosartorya fischeri (strain ATCC 1020 / DSM 3700 / CBS 544.65 / FGSC A1164 / JCM 1740 / NRRL 181 / WB 181) (Aspergillus fischerianus)).